Reading from the N-terminus, the 277-residue chain is Release factor glutamine methyltransferase (277 aa).

S-adenosyl-L-methionine is bound by residues 117 to 121 (GTGCG), Asp140, Trp168, and Asn182. 182 to 185 (NPPY) contributes to the substrate binding site.

The protein belongs to the protein N5-glutamine methyltransferase family. PrmC subfamily.

It catalyses the reaction L-glutaminyl-[peptide chain release factor] + S-adenosyl-L-methionine = N(5)-methyl-L-glutaminyl-[peptide chain release factor] + S-adenosyl-L-homocysteine + H(+). Methylates the class 1 translation termination release factors RF1/PrfA and RF2/PrfB on the glutamine residue of the universally conserved GGQ motif. The chain is Release factor glutamine methyltransferase from Buchnera aphidicola subsp. Acyrthosiphon pisum (strain APS) (Acyrthosiphon pisum symbiotic bacterium).